The chain runs to 413 residues: Histidine--tRNA ligase (413 aa).

This sequence belongs to the class-II aminoacyl-tRNA synthetase family. Homodimer.

The protein localises to the cytoplasm. The catalysed reaction is tRNA(His) + L-histidine + ATP = L-histidyl-tRNA(His) + AMP + diphosphate + H(+). In Geobacter metallireducens (strain ATCC 53774 / DSM 7210 / GS-15), this protein is Histidine--tRNA ligase.